We begin with the raw amino-acid sequence, 227 residues long: 7-cyano-7-deazaguanine synthase (227 aa).

7–17 (LSGGMDSLVTT) contributes to the ATP binding site. The Zn(2+) site is built by cysteine 187, cysteine 195, cysteine 198, and cysteine 201.

This sequence belongs to the QueC family. Zn(2+) serves as cofactor.

It catalyses the reaction 7-carboxy-7-deazaguanine + NH4(+) + ATP = 7-cyano-7-deazaguanine + ADP + phosphate + H2O + H(+). It participates in purine metabolism; 7-cyano-7-deazaguanine biosynthesis. Functionally, catalyzes the ATP-dependent conversion of 7-carboxy-7-deazaguanine (CDG) to 7-cyano-7-deazaguanine (preQ(0)). This is 7-cyano-7-deazaguanine synthase from Chlorobium luteolum (strain DSM 273 / BCRC 81028 / 2530) (Pelodictyon luteolum).